Reading from the N-terminus, the 966-residue chain is MSRVASSRVLKDSNGDIGEHLRNHIHLTNCIHLKNHMHNNNKQSPVLTDRSLLMRDLVVLQRSRSLRDPSASPNLKEDHQDSREGRRRSGLRLSGSSPIVSFGTSKVTPSDEKFDRSSRKSYRVEEVNEVYSVPSVKSVSKDRINKKVNEAIVKTLSDQLNEVGGDSDDLVSCNVRPRGDGCRRRKFRGTRRAGRAVNVRDNAAGNESEMSIASNSVPRGEKYEGEEGGGGRDREQNMSCGIPFNWSRIHHRGKTFLDIAGRSLSCGISDSKGRKGEAGTPMFSDSSSSDREALPLLVDSADNEEWVHDYSGELGIFADNLLKNGKDSVIGKKSSRKNTRWHQSFTQKYAPRTFRDLLGQNLVVQALSNAIAKRRVGLLYVFHGPNGTGKTSCARVFARALNCHSTEQSKPCGVCSSCVSYDDGKNRYIREMGPVKSFDFENLLDKTNIRQQQKQQLVLIFDDCDTMSTDCWNTLSKIVDRAPRRVVFVLVCSSLDVLPHIIVSRCQKFFFPKLKDVDIIDSLQLIASKEEIDIDKDALKLVASRSDGSLRDAEMTLEQLSLLGTRISVPLVQEMVGLISDEKLVDLLDLALSADTVNTVKNLRIIMETGLEPLALMSQLATVITDILAGSYDFTKDQCKRKFFRRQPLSKEDMEKLKQALKTLSESEKQLRVSNDKLTWLTAALLQLAPDKQYLLPHSSSADASFNHTPLTDSDPSNHVVAGTRRDDSKQGFSCKNRPSVEDIWLAVIENVRVNGLREFLYKEGKIFSISIGSAPMVQLMFNSPIAKSTAENFEEHILKAFEAVLGSPVTLEMRTESKKDLGFSSLQGLSNGERFRESGRSEIVEVADSESPMTRVRRKHLEASQNQNQNQNQSIVRGKVSLAQVIKQAEGNSWSKHKAVEIANKLEQENLKLEPRSRSLICWKASRSTRRKLSRLKVRTRKLRLHSLLKLVSCGKCLSTRSPPR.

Disordered regions lie at residues 64 to 118 (RSLR…DRSS) and 200 to 237 (RDNA…REQN). Basic and acidic residues predominate over residues 75–84 (LKEDHQDSRE). Positions 98–108 (PIVSFGTSKVT) are enriched in polar residues. The segment covering 109–118 (PSDEKFDRSS) has biased composition (basic and acidic residues). The segment covering 208-217 (SEMSIASNSV) has biased composition (polar residues). Over residues 219-236 (RGEKYEGEEGGGGRDREQ) the composition is skewed to basic and acidic residues. 384 to 391 (GPNGTGKT) serves as a coordination point for ATP. Positions 403, 412, 415, and 418 each coordinate Zn(2+). The stretch at 650-678 (SKEDMEKLKQALKTLSESEKQLRVSNDKL) forms a coiled coil. Over residues 706–717 (FNHTPLTDSDPS) the composition is skewed to polar residues. Positions 706–733 (FNHTPLTDSDPSNHVVAGTRRDDSKQGF) are disordered.

This sequence belongs to the DnaX/STICHEL family.

The polypeptide is Protein STICHEL-like 4 (Arabidopsis thaliana (Mouse-ear cress)).